The primary structure comprises 528 residues: Protein arginine N-methyltransferase 3 (528 aa).

The tract at residues 1-42 is disordered; the sequence is MCSLAAGNGQGAELGPEPLELSDSGDDAGWEDEDADAEPAQG. Cysteine 2 carries the N-acetylcysteine modification. Phosphoserine is present on residues serine 22 and serine 24. Residues 23-37 show a composition bias toward acidic residues; the sequence is DSGDDAGWEDEDADA. A C2H2-type zinc finger spans residues 46–69; it reads TPCLFCDRLFRSAEETFSHCKLEH. The residue at position 169 (serine 169) is a Phosphoserine. Residues 184 to 528 are mediates interaction with ALDH1A1; sequence MKQFAQDFVM…NSSTQTYSLQ (345 aa). Residues 214–528 enclose the SAM-dependent MTase PRMT-type domain; the sequence is DGVYFSSYGH…NSSTQTYSLQ (315 aa). S-adenosyl-L-homocysteine-binding residues include arginine 236, glycine 260, aspartate 282, serine 284, isoleucine 310, and glutamate 311. Residues glutamate 326 and glutamate 335 contribute to the active site.

Belongs to the class I-like SAM-binding methyltransferase superfamily. Protein arginine N-methyltransferase family. As to quaternary structure, monomer and homodimer. Interacts with EPB41L3 (via FERM domain); the interaction is direct and inhibits the protein-arginine N-methyltransferase activity of PRMT3. Interacts with the 40S ribosomal protein RPS2. Interacts with ALDH1A1; the interaction is direct, inhibits ALDH1A1 aldehyde dehydrogenase activity and is independent of the methyltransferase activity of PRMT3. As to expression, ubiquitously expressed.

The protein localises to the cytoplasm. The protein resides in the cytosol. It localises to the nucleus. The enzyme catalyses L-arginyl-[protein] + S-adenosyl-L-methionine = N(omega)-methyl-L-arginyl-[protein] + S-adenosyl-L-homocysteine + H(+). It catalyses the reaction L-arginyl-[protein] + 2 S-adenosyl-L-methionine = N(omega),N(omega)-dimethyl-L-arginyl-[protein] + 2 S-adenosyl-L-homocysteine + 2 H(+). With respect to regulation, inhibited by N-ethylmaleimide and high concentrations of zinc chloride. In terms of biological role, protein-arginine N-methyltransferase that catalyzes both the monomethylation and asymmetric dimethylation of the guanidino nitrogens of arginine residues in target proteins, and therefore falls into the group of type I methyltransferases. Catalyzes the asymmetric arginine dimethylation at multiple sites in the Arg/Gly-rich region of small ribosomal subunit protein uS5/RPS2. Also appears to methylate other ribosomal proteins. May regulate retinoic acid synthesis and signaling by inhibiting ALDH1A1 retinal dehydrogenase activity. Contributes to methylation of histone H4 'Arg-3', a specific tag for epigenetic transcriptional activation. Promotes osteogenesis. This is Protein arginine N-methyltransferase 3 from Rattus norvegicus (Rat).